Consider the following 158-residue polypeptide: Persistence and stress-resistance toxin PasT (158 aa).

The required for resistance of nitrosative stress but not persistence or toxic effects stretch occupies residues 70-158 (GISKTFTTRN…VRAKEVYSAR (89 aa)).

Belongs to the ribosome association toxin RatA family. As to quaternary structure, associates with 50S ribosomes.

Functionally, toxic component of a type II toxin-antitoxin (TA) system. Binds to 50S ribosomal subunits, preventing them from associating with 30S subunits to form 70S ribosomes. In this strain of E.coli low levels of PasT complement operon disruption, however high levels are toxic; their effects are abrogated by high level expression of cognate antitoxin PasI. Plays a role in persistence after antibiotic exposure and survival of nitrosative stress; the toxic and persistence phenotypes are conferred by the same N-terminal region of the protein, while the stress resistance effects can be uncoupled from them in deletion mutants. This chain is Persistence and stress-resistance toxin PasT (pasT), found in Escherichia coli O6:H1 (strain CFT073 / ATCC 700928 / UPEC).